The sequence spans 261 residues: Ribonuclease 3 (261 aa).

Residues 20 to 144 (YFALYRMLGF…FIGAIYLDKG (125 aa)) enclose the RNase III domain. E62 contributes to the Mg(2+) binding site. The active site involves D66. Positions 130 and 133 each coordinate Mg(2+). E133 is a catalytic residue. In terms of domain architecture, DRBM spans 172–241 (NFKSKLFEWC…SQMTWRKIRT (70 aa)).

It belongs to the ribonuclease III family. As to quaternary structure, homodimer. It depends on Mg(2+) as a cofactor.

The protein localises to the cytoplasm. It carries out the reaction Endonucleolytic cleavage to 5'-phosphomonoester.. In terms of biological role, digests double-stranded RNA. Involved in the processing of primary rRNA transcript to yield the immediate precursors to the large and small rRNAs (23S and 16S). Processes some mRNAs, and tRNAs when they are encoded in the rRNA operon. Processes pre-crRNA and tracrRNA of type II CRISPR loci if present in the organism. This chain is Ribonuclease 3, found in Azobacteroides pseudotrichonymphae genomovar. CFP2.